Reading from the N-terminus, the 309-residue chain is Ribonuclease Z (309 aa).

H61, H63, D65, H66, H144, D212, and H271 together coordinate Zn(2+). D65 serves as the catalytic Proton acceptor.

This sequence belongs to the RNase Z family. Homodimer. Requires Zn(2+) as cofactor.

The catalysed reaction is Endonucleolytic cleavage of RNA, removing extra 3' nucleotides from tRNA precursor, generating 3' termini of tRNAs. A 3'-hydroxy group is left at the tRNA terminus and a 5'-phosphoryl group is left at the trailer molecule.. Functionally, zinc phosphodiesterase, which displays some tRNA 3'-processing endonuclease activity. Probably involved in tRNA maturation, by removing a 3'-trailer from precursor tRNA. This is Ribonuclease Z from Clostridium acetobutylicum (strain ATCC 824 / DSM 792 / JCM 1419 / IAM 19013 / LMG 5710 / NBRC 13948 / NRRL B-527 / VKM B-1787 / 2291 / W).